The chain runs to 329 residues: Ribosomal RNA small subunit methyltransferase H (329 aa).

S-adenosyl-L-methionine is bound by residues 47–49 (GGH), Asp-67, Phe-93, Asp-115, and Gln-122.

It belongs to the methyltransferase superfamily. RsmH family.

It is found in the cytoplasm. It catalyses the reaction cytidine(1402) in 16S rRNA + S-adenosyl-L-methionine = N(4)-methylcytidine(1402) in 16S rRNA + S-adenosyl-L-homocysteine + H(+). In terms of biological role, specifically methylates the N4 position of cytidine in position 1402 (C1402) of 16S rRNA. The chain is Ribosomal RNA small subunit methyltransferase H from Blochmanniella pennsylvanica (strain BPEN).